A 332-amino-acid chain; its full sequence is Invasin IpaD (332 aa).

A compositionally biased stretch (low complexity) spans 1–25 (MNITTLTNSISTSSFSPNNTNGSST). Positions 1–43 (MNITTLTNSISTSSFSPNNTNGSSTETVNSDIKTTTSSHPVSS) are disordered. The segment covering 26 to 43 (ETVNSDIKTTTSSHPVSS) has biased composition (polar residues). Residues 44–77 (LTMLNDTLHNIRTTNQALKKELSQKTLTKTSLEE) adopt a coiled-coil conformation. The segment at 192–267 (VNSLKKALEE…KSLDNLGGNG (76 aa)) is ipaB binding.

It belongs to the invasin protein D family.

It localises to the secreted. Required for bacterial invasion of host cells. Controls IpaB and IpaC secretion, and the efficiency with which they are physically inserted into target cell membranes. These proteins are exported via T3SS to form a pore in the host membrane that allows the translocation of the other effectors into the host cytoplasm. Along with IpaB, is essential for both blocking secretion through the Mxi/Spa translocon in the absence of a secretion-inducing signal, and for controlling the level of secretion in the presence of this signal. In Shigella flexneri, this protein is Invasin IpaD (ipaD).